The sequence spans 156 residues: NAD(P)H-quinone oxidoreductase subunit N (156 aa).

It belongs to the complex I NdhN subunit family. In terms of assembly, NDH-1 can be composed of about 15 different subunits; different subcomplexes with different compositions have been identified which probably have different functions.

The protein localises to the cellular thylakoid membrane. It catalyses the reaction a plastoquinone + NADH + (n+1) H(+)(in) = a plastoquinol + NAD(+) + n H(+)(out). The enzyme catalyses a plastoquinone + NADPH + (n+1) H(+)(in) = a plastoquinol + NADP(+) + n H(+)(out). NDH-1 shuttles electrons from an unknown electron donor, via FMN and iron-sulfur (Fe-S) centers, to quinones in the respiratory and/or the photosynthetic chain. The immediate electron acceptor for the enzyme in this species is believed to be plastoquinone. Couples the redox reaction to proton translocation, and thus conserves the redox energy in a proton gradient. Cyanobacterial NDH-1 also plays a role in inorganic carbon-concentration. This chain is NAD(P)H-quinone oxidoreductase subunit N, found in Prochlorococcus marinus subsp. pastoris (strain CCMP1986 / NIES-2087 / MED4).